A 214-amino-acid chain; its full sequence is Non-structural protein NP-1 (214 aa).

Disordered stretches follow at residues 1-85 (MSSE…TRTN) and 192-214 (ESEEVTDEEMLSAVESMETNASN). Positions 33–43 (SRSRSPIRRHG) are enriched in basic residues. Positions 44 to 55 (EKNLEYAHHNNQ) are enriched in basic and acidic residues. Over residues 56–71 (DNRQSSYTASKTSDQA) the composition is skewed to polar residues. Acidic residues predominate over residues 192-201 (ESEEVTDEEM).

It belongs to the Bocaparvovirus Non-structural protein NP-1 family.

It is found in the host nucleus. Functionally, required for the expression of the capsid proteins. Performs the splicing and internal polyadenylation of the viral capsid-encoding mRNA precursor, which allows its maturation and expression. Transactivates the viral promoter. This Human bocavirus 4 (HBoV4) protein is Non-structural protein NP-1 (NP1).